The chain runs to 62 residues: Protein YhjR (62 aa).

In Escherichia coli (strain K12), this protein is Protein YhjR (yhjR).